The following is a 591-amino-acid chain: MKKISLPKIGIRPVIDGRRMGVRESLEEQTMNMAKATAALLTEKLRHACGAAVECVISDTCIAGMAEAAACEEKFSSQNVGLTITVTPCWCYGSETIDMDPTRPKAIWGFNGTERPGAVYLAAALAAHSQKGIPAFSIYGHDVQDADDTSIPADVEEKLLRFARAGLAVASMKGKSYLSLGGVSMGIAGSIVDHNFFESWLGMKVQAVDMTELRRRIDQKIYDEAELEMALAWADKNFRYGEDENNKQYQRNAEQSRAVLRESLLMAMCIRDMMQGNSKLADIGRVEESLGYNAIAAGFQGQRHWTDQYPNGDTAEAILNSSFDWNGVRKPFVVATENDSLNGVAMLMGHQLTGTAQIFADVRTYWSPEAIERVTGHKLDGLAEHGIIHLINSGSAALDGSCKQRDSEGKPTMKPHWEISQQEADACLAATEWCPAIHEYFRGGGYSSRFLTEGGVPFTMTRVNIIKGLGPVLQIAEGWSVELPKDVHDILNKRTNSTWPTTWFAPRLTGKGPFTDVYSVMANWGANHGVLTIGHVGADFITLASMLRIPVCMHNVEETKVYRPSAWAAHGMDIEGQDYRACQNYGPLYKR.

Residues Glu337 and Asp361 each act as proton acceptor in the active site. Mn(2+) contacts are provided by Glu337, Asp361, and His528.

It belongs to the L-fucose isomerase family. As to quaternary structure, homohexamer. The cofactor is Mn(2+).

The protein localises to the cytoplasm. It carries out the reaction L-fucose = L-fuculose. The protein operates within carbohydrate degradation; L-fucose degradation; L-lactaldehyde and glycerone phosphate from L-fucose: step 1/3. In terms of biological role, converts the aldose L-fucose into the corresponding ketose L-fuculose. This Escherichia coli O6:K15:H31 (strain 536 / UPEC) protein is L-fucose isomerase.